Consider the following 145-residue polypeptide: Flagellar assembly factor FliW (145 aa).

Belongs to the FliW family. As to quaternary structure, interacts with translational regulator CsrA and flagellin(s).

The protein localises to the cytoplasm. In terms of biological role, acts as an anti-CsrA protein, binds CsrA and prevents it from repressing translation of its target genes, one of which is flagellin. Binds to flagellin and participates in the assembly of the flagellum. The sequence is that of Flagellar assembly factor FliW from Clostridium tetani (strain Massachusetts / E88).